We begin with the raw amino-acid sequence, 218 residues long: Probable nicotinate-nucleotide adenylyltransferase (218 aa).

Belongs to the NadD family.

The catalysed reaction is nicotinate beta-D-ribonucleotide + ATP + H(+) = deamido-NAD(+) + diphosphate. The protein operates within cofactor biosynthesis; NAD(+) biosynthesis; deamido-NAD(+) from nicotinate D-ribonucleotide: step 1/1. Catalyzes the reversible adenylation of nicotinate mononucleotide (NaMN) to nicotinic acid adenine dinucleotide (NaAD). The chain is Probable nicotinate-nucleotide adenylyltransferase from Syntrophotalea carbinolica (strain DSM 2380 / NBRC 103641 / GraBd1) (Pelobacter carbinolicus).